The following is a 314-amino-acid chain: Leucotoxin LukE (314 aa).

A signal peptide spans 1–28 (MFKKKMLAASLSVGLIAPLASPIQESRA).

The protein belongs to the aerolysin family. As to quaternary structure, toxicity requires sequential binding and synergistic association of a class S and a class F component which form heterooligomeric complexes. LukE (class S) associates with LukD (class F). LukE can also associate with HlgB.

Its subcellular location is the secreted. Part of a bi-component leucotoxin that acts by forming pores in the membrane of the target cells. LukE-LukD is as effective as the Panton-Valentine leucocidin (PVL) for inducing dermonecrosis when injected in the rabbit skin, but not hemolytic and poorly leucotoxic on human blood cells compared to other leucotoxins expressed by S.aureus. The chain is Leucotoxin LukE (lukE) from Staphylococcus aureus.